The chain runs to 450 residues: 3-phosphoshikimate 1-carboxyvinyltransferase (450 aa).

The interval 1–26 (MSGHGTPIPMTSRRASPLKGEAHVPG) is disordered. Residues Lys28, Ser29, and Arg33 each contribute to the 3-phosphoshikimate site. Lys28 contacts phosphoenolpyruvate. Residues Gly101 and Arg129 each coordinate phosphoenolpyruvate. 3-phosphoshikimate-binding residues include Ser174, Gln176, Asp327, and Lys354. Gln176 is a binding site for phosphoenolpyruvate. The active-site Proton acceptor is Asp327. Phosphoenolpyruvate is bound by residues Arg358 and Arg403.

This sequence belongs to the EPSP synthase family. As to quaternary structure, monomer.

The protein resides in the cytoplasm. It carries out the reaction 3-phosphoshikimate + phosphoenolpyruvate = 5-O-(1-carboxyvinyl)-3-phosphoshikimate + phosphate. It participates in metabolic intermediate biosynthesis; chorismate biosynthesis; chorismate from D-erythrose 4-phosphate and phosphoenolpyruvate: step 6/7. Catalyzes the transfer of the enolpyruvyl moiety of phosphoenolpyruvate (PEP) to the 5-hydroxyl of shikimate-3-phosphate (S3P) to produce enolpyruvyl shikimate-3-phosphate and inorganic phosphate. This Ruegeria sp. (strain TM1040) (Silicibacter sp.) protein is 3-phosphoshikimate 1-carboxyvinyltransferase.